The following is a 262-amino-acid chain: 4-hydroxy-tetrahydrodipicolinate reductase (262 aa).

9–14 contributes to the NAD(+) binding site; sequence GCLGRM. R36 provides a ligand contact to NADP(+). NAD(+)-binding positions include 100–102 and 121–124; these read GTT and SANM. H154 acts as the Proton donor/acceptor in catalysis. H155 lines the (S)-2,3,4,5-tetrahydrodipicolinate pocket. Catalysis depends on K158, which acts as the Proton donor. 164–165 lines the (S)-2,3,4,5-tetrahydrodipicolinate pocket; sequence GT.

This sequence belongs to the DapB family.

It is found in the cytoplasm. It catalyses the reaction (S)-2,3,4,5-tetrahydrodipicolinate + NAD(+) + H2O = (2S,4S)-4-hydroxy-2,3,4,5-tetrahydrodipicolinate + NADH + H(+). The enzyme catalyses (S)-2,3,4,5-tetrahydrodipicolinate + NADP(+) + H2O = (2S,4S)-4-hydroxy-2,3,4,5-tetrahydrodipicolinate + NADPH + H(+). The protein operates within amino-acid biosynthesis; L-lysine biosynthesis via DAP pathway; (S)-tetrahydrodipicolinate from L-aspartate: step 4/4. Its function is as follows. Catalyzes the conversion of 4-hydroxy-tetrahydrodipicolinate (HTPA) to tetrahydrodipicolinate. The protein is 4-hydroxy-tetrahydrodipicolinate reductase of Wolbachia pipientis subsp. Culex pipiens (strain wPip).